Reading from the N-terminus, the 575-residue chain is Hemagglutinin-neuraminidase (575 aa).

Positions 1–10 (MDGDRGKRDS) are enriched in basic and acidic residues. A disordered region spans residues 1-24 (MDGDRGKRDSYWSTSPSGSTTKLA). Residues 1–37 (MDGDRGKRDSYWSTSPSGSTTKLASGWERSSKVDTWL) lie on the Intravirion side of the membrane. The incorporation in virion stretch occupies residues 10–14 (SYWST). Residues 11-23 (YWSTSPSGSTTKL) are compositionally biased toward polar residues. Residues 38–58 (LILSFTQWALSIATVIICIII) traverse the membrane as a helical segment. Residues 59-140 (SARQGYSMKE…RQELTQLCES (82 aa)) form an involved in interaction with F protein region. The Virion surface segment spans residues 59–575 (SARQGYSMKE…SIPKLCKAES (517 aa)). A glycan (N-linked (GlcNAc...) asparagine; by host) is linked at N77. 4 disulfides stabilise this stretch: C192/C216, C258/C271, C357/C469, and C463/C473. The involved in neuraminidase activity stretch occupies residues 254–259 (NRKSCS). N-linked (GlcNAc...) asparagine; by host glycosylation is found at N499 and N511. A disulfide bridge connects residues C535 and C544.

Belongs to the paramyxoviruses hemagglutinin-neuraminidase family. Homotetramer; composed of disulfide-linked homodimers. Interacts with F protein trimer. Post-translationally, N-glycosylated; glycans consist of a mixture of high mannose-type oligosaccharides and of complex-type oligosaccharides.

It localises to the virion membrane. Its subcellular location is the host cell membrane. It catalyses the reaction Hydrolysis of alpha-(2-&gt;3)-, alpha-(2-&gt;6)-, alpha-(2-&gt;8)- glycosidic linkages of terminal sialic acid residues in oligosaccharides, glycoproteins, glycolipids, colominic acid and synthetic substrates.. In terms of biological role, attaches the virus to sialic acid-containing cell receptors and thereby initiating infection. Binding of HN protein to the receptor induces a conformational change that allows the F protein to trigger virion/cell membranes fusion. Neuraminidase activity ensures the efficient spread of the virus by dissociating the mature virions from the neuraminic acid containing glycoproteins. This chain is Hemagglutinin-neuraminidase (HN), found in Sendai virus (strain Fushimi) (SeV).